The following is a 594-amino-acid chain: MSRQACKKSFSCGSQGFSGHSAVVSGSSRSSCVARSGAASGGACGFRSGAGSLGSHSLYSLGGSKSISISVAAGGSRAGGFSGGRSSCGSGFGSGYGGSLGGSRGMGAGFGGPSGFGGAGGFGRPGSFGPGSCPGGIQEVTINQSLLQPLNVEIDPQIGQVKAQEREQIKTLNNKFASFIDKVRFLEQQNKVLETKWELLQQQTIRSGSGPQNLEPFFESYISCLRKQLDSLLGAKGSLEGELKSMQDLVEDFKKKYEEEINRRTAAENEFVGLKKDVDGAFMNKVELQAKVDSLTDEINFLRTLYDMELSQIQSHVSDTSVVLSMDNNRCLDLDSIIAEVKAQYEDIAQKSKAEAEALYQTKLGELQTTAGRHGDDLRSTKSEIMDLNRMIQRLRAEIENVKKQNTNMQTSIAEAEQRGERALKDADTKFQDLQVALQKAKEDMARLLKEYQELMNVKLALDVEIATYRKLLEGEECRLSGEFQNAVSISVVSNVTSTSSSGSFRGTGGSNYGGDSSGRSGGSSSSSSRGSSSRGSSGSRLGSGGSISVSQQRMGFNSGGSQTSVGSSYKSGRGGSSSVQFSQTTSSSQQRSK.

Residues 1–164 (MSRQACKKSF…DPQIGQVKAQ (164 aa)) form a head region. Arg-85 and Arg-104 each carry omega-N-methylarginine. The segment at 165-200 (EREQIKTLNNKFASFIDKVRFLEQQNKVLETKWELL) is coil 1A. Residues 165–480 (EREQIKTLNN…KLLEGEECRL (316 aa)) enclose the IF rod domain. Positions 201 to 221 (QQQTIRSGSGPQNLEPFFESY) are linker 1. The coil 1B stretch occupies residues 222–313 (ISCLRKQLDS…TLYDMELSQI (92 aa)). The tract at residues 314-337 (QSHVSDTSVVLSMDNNRCLDLDSI) is linker 12. A coil 2 region spans residues 338–476 (IAEVKAQYED…ATYRKLLEGE (139 aa)). The segment at 477-594 (ECRLSGEFQN…TTSSSQQRSK (118 aa)) is tail. The interval 497–594 (TSTSSSGSFR…TTSSSQQRSK (98 aa)) is disordered. The span at 506 to 522 (RGTGGSNYGGDSSGRSG) shows a compositional bias: gly residues. Positions 523–551 (GSSSSSSRGSSSRGSSGSRLGSGGSISVS) are enriched in low complexity. At Arg-541 the chain carries Omega-N-methylarginine. Residues 552–564 (QQRMGFNSGGSQT) show a composition bias toward polar residues. A compositionally biased stretch (low complexity) spans 565-594 (SVGSSYKSGRGGSSSVQFSQTTSSSQQRSK).

This sequence belongs to the intermediate filament family. As to quaternary structure, heterotetramer of two type I and two type II keratins.

Probably contributes to terminal cornification. In Mus musculus (Mouse), this protein is Keratin, type II cytoskeletal 2 oral.